The primary structure comprises 565 residues: MSQSNLQRSMPIVTLPDLFDARFDNRFVRQLPGDPETRNVPRQVRNAGYTQVSPTPVRSPRLLAWADEVGEMLGIARPASPVSPAVEVLAGNRILPSMQPYAARYGGHQFGHWAGQLGDGRAITLGELISPNDKRYELQLKGAGKTPYSRTADGRAVLRSSVREFLCSEAMHSLGVPTTRALSLVATGEAVIRDMFYDGHPGAEPGAIVCRVSPSFLRFGNFEILAAQKEPELLRQLADFVIGEHFPELASSHRPPEVYAKWFEEVCRRTGILVAHWMRVGFVHGVMNTDNMSILGLTIDYGPYGWLEGFDLHWTPNTTDAQGRRYCYGNQPKIAQWNLTRLAGALTPLIEDDAALEHGLAVFGETFNNTWSGMLAAKLGLASLEHSDDDSLLSDLFETLQQVETDMTLFFRCLMNIPLNPISGNRATTFPAPENLESVDQMNDHGLVELFRPAFYDAHQAFSHAHLTRLAGWLRRYIARVRQEGEPEGLRYHRMSRANPKYVLRNYLAQQAIEALERGDDSVIIRLMEMLKHPYDEQPEHEDLAARRPEWARNKPGCSALSCSS.

Glycine 118, glycine 120, arginine 121, lysine 141, aspartate 153, glycine 154, arginine 211, and arginine 218 together coordinate ATP. The active-site Proton acceptor is aspartate 290. Asparagine 291 and aspartate 300 together coordinate Mg(2+). ATP is bound at residue aspartate 300.

This sequence belongs to the SELO family. Mg(2+) is required as a cofactor. Requires Mn(2+) as cofactor.

The catalysed reaction is L-seryl-[protein] + ATP = 3-O-(5'-adenylyl)-L-seryl-[protein] + diphosphate. The enzyme catalyses L-threonyl-[protein] + ATP = 3-O-(5'-adenylyl)-L-threonyl-[protein] + diphosphate. It carries out the reaction L-tyrosyl-[protein] + ATP = O-(5'-adenylyl)-L-tyrosyl-[protein] + diphosphate. It catalyses the reaction L-histidyl-[protein] + UTP = N(tele)-(5'-uridylyl)-L-histidyl-[protein] + diphosphate. The catalysed reaction is L-seryl-[protein] + UTP = O-(5'-uridylyl)-L-seryl-[protein] + diphosphate. The enzyme catalyses L-tyrosyl-[protein] + UTP = O-(5'-uridylyl)-L-tyrosyl-[protein] + diphosphate. Nucleotidyltransferase involved in the post-translational modification of proteins. It can catalyze the addition of adenosine monophosphate (AMP) or uridine monophosphate (UMP) to a protein, resulting in modifications known as AMPylation and UMPylation. This is Protein nucleotidyltransferase YdiU from Nitrosospira multiformis (strain ATCC 25196 / NCIMB 11849 / C 71).